Consider the following 94-residue polypeptide: MLKPLEDRVVIAVKDEAEQTVGGIVIASNAKQKPQTGKVVAVGAGAMTSDGQRIPLDVKENDEVIYDKYAGSEVEYEGQQYLVLHAKDIIAIIE.

The protein belongs to the GroES chaperonin family. Heptamer of 7 subunits arranged in a ring. Interacts with the chaperonin GroEL.

Its subcellular location is the cytoplasm. Its function is as follows. Together with the chaperonin GroEL, plays an essential role in assisting protein folding. The GroEL-GroES system forms a nano-cage that allows encapsulation of the non-native substrate proteins and provides a physical environment optimized to promote and accelerate protein folding. GroES binds to the apical surface of the GroEL ring, thereby capping the opening of the GroEL channel. The protein is Co-chaperonin GroES of Latilactobacillus sakei subsp. sakei (strain 23K) (Lactobacillus sakei subsp. sakei).